The chain runs to 417 residues: D-amino acid dehydrogenase (417 aa).

3-17 (VVILGSGVIGVTSAW) is an FAD binding site.

It belongs to the DadA oxidoreductase family. It depends on FAD as a cofactor.

It catalyses the reaction a D-alpha-amino acid + A + H2O = a 2-oxocarboxylate + AH2 + NH4(+). Its pathway is amino-acid degradation; D-alanine degradation; NH(3) and pyruvate from D-alanine: step 1/1. Oxidative deamination of D-amino acids. The polypeptide is D-amino acid dehydrogenase (Edwardsiella ictaluri (strain 93-146)).